The chain runs to 100 residues: Urease subunit gamma (100 aa).

Belongs to the urease gamma subunit family. As to quaternary structure, heterotrimer of UreA (gamma), UreB (beta) and UreC (alpha) subunits. Three heterotrimers associate to form the active enzyme.

It is found in the cytoplasm. It carries out the reaction urea + 2 H2O + H(+) = hydrogencarbonate + 2 NH4(+). Its pathway is nitrogen metabolism; urea degradation; CO(2) and NH(3) from urea (urease route): step 1/1. This Limosilactobacillus fermentum (Lactobacillus fermentum) protein is Urease subunit gamma.